A 35-amino-acid chain; its full sequence is U1-segestritoxin-Sf1a (35 aa).

2 cysteine pairs are disulfide-bonded: C10-C22 and C17-C28. Positions 31–33 are keys region for toxin activity; that stretch reads DPW.

Belongs to the neurotoxin 16 (SFI) family. Expressed by the venom gland.

It is found in the secreted. Insecticidal toxin. This chain is U1-segestritoxin-Sf1a, found in Segestria florentina (Tube-web spider).